The primary structure comprises 98 residues: Citrate lyase acyl carrier protein (98 aa).

Ser-14 carries the O-(phosphoribosyl dephospho-coenzyme A)serine modification.

Belongs to the CitD family. As to quaternary structure, oligomer with a subunit composition of (alpha,beta,gamma)6.

It is found in the cytoplasm. Functionally, covalent carrier of the coenzyme of citrate lyase. The chain is Citrate lyase acyl carrier protein from Shigella boydii serotype 4 (strain Sb227).